A 199-amino-acid chain; its full sequence is Probable adenylyl-sulfate kinase (199 aa).

34–41 provides a ligand contact to ATP; sequence GLSGSGKS. The Phosphoserine intermediate role is filled by serine 108.

This sequence belongs to the APS kinase family.

The catalysed reaction is adenosine 5'-phosphosulfate + ATP = 3'-phosphoadenylyl sulfate + ADP + H(+). Its pathway is sulfur metabolism; hydrogen sulfide biosynthesis; sulfite from sulfate: step 2/3. Catalyzes the synthesis of activated sulfate. The sequence is that of Probable adenylyl-sulfate kinase (yisZ) from Bacillus subtilis (strain 168).